Reading from the N-terminus, the 81-residue chain is Putative membrane protein insertion efficiency factor (81 aa).

This sequence belongs to the UPF0161 family.

The protein localises to the cell inner membrane. In terms of biological role, could be involved in insertion of integral membrane proteins into the membrane. This Thermosipho melanesiensis (strain DSM 12029 / CIP 104789 / BI429) protein is Putative membrane protein insertion efficiency factor.